We begin with the raw amino-acid sequence, 453 residues long: MSDVSTQSPKVGFVSLGCPKALVDSEQIITQLRAEGYEISGTYGGADLVVVNTCGFIDEAVQESLDAIGEALAENGKVIVTGCLGAKKDASGQDIITSVHPKVLAVTGPHALGEVMEAVHTHLPKPHDPFIDLVPPQGIKLTPKHYAYLKISEGCNHRCSFCIIPSMRGDLVSRPVAEVMLEAENLLKAGVKELLVISQDTSAYGVDVKFRMGFWNGRPLKTRMTELVGALGELASQYGAWVRLHYVYPYPSVDEVMPLMAEGKVLPYLDVPLQHAHPDVLKRMKRPANAEKTLDRIRAWREVCPELTIRSTFIAGFPGETEEEFQTLLDFIAEAELDRVGCFAYSPVEGATANDLPGALPDEVREERRARFMEVAERVSARGLQRKVGKSLRVLVDEVNQDGGIGRSSADAPEIDGLVYIAPPSKPYKRYKAGDFVSVKITGADGHDLWGEV.

An MTTase N-terminal domain is found at 9-124; sequence PKVGFVSLGC…VMEAVHTHLP (116 aa). Cys-18, Cys-54, Cys-83, Cys-155, Cys-159, and Cys-162 together coordinate [4Fe-4S] cluster. The 242-residue stretch at 141-382 folds into the Radical SAM core domain; it reads LTPKHYAYLK…MEVAERVSAR (242 aa). One can recognise a TRAM domain in the interval 385 to 453; the sequence is QRKVGKSLRV…ADGHDLWGEV (69 aa).

It belongs to the methylthiotransferase family. RimO subfamily. It depends on [4Fe-4S] cluster as a cofactor.

Its subcellular location is the cytoplasm. It carries out the reaction L-aspartate(89)-[ribosomal protein uS12]-hydrogen + (sulfur carrier)-SH + AH2 + 2 S-adenosyl-L-methionine = 3-methylsulfanyl-L-aspartate(89)-[ribosomal protein uS12]-hydrogen + (sulfur carrier)-H + 5'-deoxyadenosine + L-methionine + A + S-adenosyl-L-homocysteine + 2 H(+). In terms of biological role, catalyzes the methylthiolation of an aspartic acid residue of ribosomal protein uS12. The protein is Ribosomal protein uS12 methylthiotransferase RimO of Ralstonia pickettii (strain 12J).